The sequence spans 248 residues: AA9 family lytic polysaccharide monooxygenase G (248 aa).

Positions 1-21 (MLPNAAGLLVAGVVSLSGVAA) are cleaved as a signal peptide. A Cu(2+)-binding site is contributed by H22. N-linked (GlcNAc...) asparagine glycosylation is present at N58. Cysteines 77 and 195 form a disulfide. H107 provides a ligand contact to Cu(2+). Q190 provides a ligand contact to O2. Y192 contacts Cu(2+). N203 is a glycosylation site (N-linked (GlcNAc...) asparagine).

It belongs to the polysaccharide monooxygenase AA9 family. Cu(2+) serves as cofactor.

The protein resides in the secreted. It catalyses the reaction [(1-&gt;4)-beta-D-glucosyl]n+m + reduced acceptor + O2 = 4-dehydro-beta-D-glucosyl-[(1-&gt;4)-beta-D-glucosyl]n-1 + [(1-&gt;4)-beta-D-glucosyl]m + acceptor + H2O.. Lytic polysaccharide monooxygenase (LPMO) that depolymerizes crystalline and amorphous polysaccharides via the oxidation of scissile alpha- or beta-(1-4)-glycosidic bonds, yielding C1 or C4 oxidation products. Catalysis by LPMOs requires the reduction of the active-site copper from Cu(II) to Cu(I) by a reducing agent and H(2)O(2) or O(2) as a cosubstrate. The protein is AA9 family lytic polysaccharide monooxygenase G of Malbranchea cinnamomea (Thermophilic fungus).